The chain runs to 216 residues: Probable nicotinate-nucleotide adenylyltransferase (216 aa).

The protein belongs to the NadD family.

The enzyme catalyses nicotinate beta-D-ribonucleotide + ATP + H(+) = deamido-NAD(+) + diphosphate. Its pathway is cofactor biosynthesis; NAD(+) biosynthesis; deamido-NAD(+) from nicotinate D-ribonucleotide: step 1/1. Its function is as follows. Catalyzes the reversible adenylation of nicotinate mononucleotide (NaMN) to nicotinic acid adenine dinucleotide (NaAD). The polypeptide is Probable nicotinate-nucleotide adenylyltransferase (Klebsiella pneumoniae (strain 342)).